The following is a 328-amino-acid chain: Peroxidase 71 (328 aa).

The first 23 residues, 1 to 23 (MGLVRSLCLLITFLNCLIISVHG), serve as a signal peptide directing secretion. 4 cysteine pairs are disulfide-bonded: Cys44–Cys120, Cys77–Cys82, Cys126–Cys324, and Cys204–Cys235. His75 functions as the Proton acceptor in the catalytic mechanism. Positions 76, 79, 81, 83, and 85 each coordinate Ca(2+). Pro167 is a binding site for substrate. His197 lines the heme b pocket. Ca(2+) is bound at residue Thr198. Residue Asn213 is glycosylated (N-linked (GlcNAc...) asparagine). Residues Asp248, Ser251, and Asp256 each coordinate Ca(2+). Asn262 is a glycosylation site (N-linked (GlcNAc...) asparagine).

It belongs to the peroxidase family. Classical plant (class III) peroxidase subfamily. The cofactor is heme b. Requires Ca(2+) as cofactor. In terms of tissue distribution, slightly expressed in roots.

The protein resides in the secreted. The catalysed reaction is 2 a phenolic donor + H2O2 = 2 a phenolic radical donor + 2 H2O. Functionally, removal of H(2)O(2), oxidation of toxic reductants, biosynthesis and degradation of lignin, suberization, auxin catabolism, response to environmental stresses such as wounding, pathogen attack and oxidative stress. These functions might be dependent on each isozyme/isoform in each plant tissue. The protein is Peroxidase 71 (PER71) of Arabidopsis thaliana (Mouse-ear cress).